A 392-amino-acid chain; its full sequence is Phosphoglycerate kinase (392 aa).

Substrate contacts are provided by residues 21 to 23 (DLN), arginine 36, 59 to 62 (HRGR), arginine 113, and arginine 146. Residues lysine 197, glutamate 314, and 340–343 (GGDT) each bind ATP.

It belongs to the phosphoglycerate kinase family. In terms of assembly, monomer.

It is found in the cytoplasm. The enzyme catalyses (2R)-3-phosphoglycerate + ATP = (2R)-3-phospho-glyceroyl phosphate + ADP. It participates in carbohydrate degradation; glycolysis; pyruvate from D-glyceraldehyde 3-phosphate: step 2/5. The polypeptide is Phosphoglycerate kinase (Vesicomyosocius okutanii subsp. Calyptogena okutanii (strain HA)).